The primary structure comprises 838 residues: Protein P (838 aa).

A terminal protein domain (TP) region spans residues 1–179; sequence MPLSYQHFRK…FCGSPYSWEQ (179 aa). The segment at 180 to 341 is spacer; sequence ELQHSQRHGD…YCLSHLVNLL (162 aa). A disordered region spans residues 218 to 242; it reads LGLQPHQGPLATSQPGRSGSIRPRA. Positions 342–685 are polymerase/reverse transcriptase domain (RT); it reads EDWGPCVEHG…YLNLYPVARQ (344 aa). One can recognise a Reverse transcriptase domain in the interval 352-595; the sequence is EHHIRIPRTP…YSLNFMGYVI (244 aa). Mg(2+)-binding residues include Asp424, Asp546, and Asp547.

This sequence belongs to the hepadnaviridae P protein family.

The catalysed reaction is DNA(n) + a 2'-deoxyribonucleoside 5'-triphosphate = DNA(n+1) + diphosphate. It catalyses the reaction Endonucleolytic cleavage to 5'-phosphomonoester.. With respect to regulation, activated by host HSP70 and HSP40 in vitro to be able to bind the epsilon loop of the pgRNA. Because deletion of the RNase H region renders the protein partly chaperone-independent, the chaperones may be needed indirectly to relieve occlusion of the RNA-binding site by this domain. Inhibited by several reverse-transcriptase inhibitors: Lamivudine, Adefovir and Entecavir. Multifunctional enzyme that converts the viral RNA genome into dsDNA in viral cytoplasmic capsids. This enzyme displays a DNA polymerase activity that can copy either DNA or RNA templates, and a ribonuclease H (RNase H) activity that cleaves the RNA strand of RNA-DNA heteroduplexes in a partially processive 3'- to 5'-endonucleasic mode. Neo-synthesized pregenomic RNA (pgRNA) are encapsidated together with the P protein, and reverse-transcribed inside the nucleocapsid. Initiation of reverse-transcription occurs first by binding the epsilon loop on the pgRNA genome, and is initiated by protein priming, thereby the 5'-end of (-)DNA is covalently linked to P protein. Partial (+)DNA is synthesized from the (-)DNA template and generates the relaxed circular DNA (RC-DNA) genome. After budding and infection, the RC-DNA migrates in the nucleus, and is converted into a plasmid-like covalently closed circular DNA (cccDNA). The activity of P protein does not seem to be necessary for cccDNA generation, and is presumably released from (+)DNA by host nuclear DNA repair machinery. The chain is Protein P from Homo sapiens (Human).